Reading from the N-terminus, the 124-residue chain is Fluoride-specific ion channel FluC (124 aa).

Helical transmembrane passes span 5–25 (FLQVALGGALGSAARYGVNIL), 35–55 (LGTLSVNIAGCLAMGLLAALL), 63–83 (LAPFLLTGMLGGFTTFSAFAL), and 98–118 (LGYVLGSVVLSLAAVIAGLTV). Na(+)-binding residues include G73 and T76.

It belongs to the fluoride channel Fluc/FEX (TC 1.A.43) family.

Its subcellular location is the cell inner membrane. The catalysed reaction is fluoride(in) = fluoride(out). Its activity is regulated as follows. Na(+) is not transported, but it plays an essential structural role and its presence is essential for fluoride channel function. Its function is as follows. Fluoride-specific ion channel. Important for reducing fluoride concentration in the cell, thus reducing its toxicity. The polypeptide is Fluoride-specific ion channel FluC (Paracoccus denitrificans (strain Pd 1222)).